An 840-amino-acid polypeptide reads, in one-letter code: Transient receptor potential cation channel subfamily V member 1 (840 aa).

Residues 1-12 (MKNWGSSDSGGS) are compositionally biased toward low complexity. Positions 1–43 (MKNWGSSDSGGSEDPPQEDSCLDPLDGDPNSRPVPAKPHIFPT) are disordered. Residues 1–433 (MKNWGSSDSG…QDKWDRFVKR (433 aa)) are Cytoplasmic-facing. ANK repeat units follow at residues 111–139 (KLYD…FLQK) and 154–186 (TGKT…QTDS). ATP is bound by residues R116, K156, K161, N165, 200 to 203 (YKGQ), and 211 to 212 (ER). ANK repeat units lie at residues 204–229 (TALH…ADVQ), 250–277 (ELPL…QPAD), 286–322 (NTVL…KLHP), and 336–359 (TPLA…REIQ). T371 bears the Phosphothreonine; by PKA; in vitro mark. The stretch at 394–416 (NSVLEVIAYSSSETPNRHDMLLV) is one ANK 7 repeat. Residues 434–455 (IFYFNFFIYCLYMIIFTTAAYY) traverse the membrane as a helical segment. The Extracellular segment spans residues 456–473 (RPVDGLPPYKLKHTVGDY). A helical transmembrane segment spans residues 474 to 498 (FRVTGEILSVLGGVYFFFRGIQYFL). Residues 499–511 (QRRPSLKTLFVDS) are Cytoplasmic-facing. S503 is subject to Phosphoserine; by PKC/PRKCE. Position 512–513 (512–513 (YS)) interacts with resiniferatoxin. Residues 512 to 533 (YSEMLFFVQSLFMLGTVVLYFC) form a helical membrane-spanning segment. Topologically, residues 534–536 (HHK) are extracellular. Residues 537–557 (EYVASMVFSLAMGWTNMLYYT) traverse the membrane as a helical segment. Residues T551 and R558 each contribute to the resiniferatoxin site. Over 558–560 (RGF) the chain is Cytoplasmic. A helical membrane pass occupies residues 561–599 (QQMGIYAVMIEKMILRDLCRFMFVYLVFLFGFSTAVVTL). The Extracellular segment spans residues 600 to 631 (IEDGKNNSVPTESTLHRWRGPGCRPPDSSYNS). The N-linked (GlcNAc...) asparagine glycan is linked to N605. The pore-forming intramembrane region spans 632–653 (LYSTCLELFKFTIGMGDLEFTE). Position 645 (G645) interacts with Na(+). A Selectivity filter motif is present at residues 645–648 (GMGD). D648 provides a ligand contact to Ca(2+). Residues 654–657 (NYDF) are Extracellular-facing. The chain crosses the membrane as a helical span at residues 658 to 684 (KAVFIILLLAYVILTYILLLNMLIALM). Over 685–840 (GETVNKIAQE…FKDPVGLGEK (156 aa)) the chain is Cytoplasmic. The AD stretch occupies residues 686-714 (ETVNKIAQESKNIWKLQRAITILDTEKSF). The residue at position 706 (T706) is a Phosphothreonine. The segment at 769-803 (EGIKRTLSFSLRSGRVSGRNWKNFSLVPLLRDAST) is interaction with calmodulin. Residue S776 is modified to Phosphoserine. The segment at 779-794 (LRSGRVSGRNWKNFSL) is required for PIP2-mediated channel inhibition. Position 802 is a phosphoserine; by PKC/PRKCE and PKC/PRKCZ (S802). S822 is modified (phosphoserine).

The protein belongs to the transient receptor (TC 1.A.4) family. TrpV subfamily. TRPV1 sub-subfamily. Homotetramer. Interacts with PIRT. May also form a heteromeric channel with TRPV3. Interacts with CALM, PRKCM and CSK. Interacts with PRKCG and NTRK1, probably by forming a trimeric complex. Interacts with the Scolopendra mutilans RhTx toxin. Interacts with TMEM100. Interacts with PACS2. Phosphorylation by PKA reverses capsaicin-induced dephosphorylation at multiple sites. Phosphorylation by CAMKII seems to regulate binding to vanilloids. Phosphorylated and modulated by PRKCE, PRKCM and probably PRKCZ. Dephosphorylation by calcineurin seems to lead to receptor desensitization and phosphorylation by CAMKII recovers activity.

It is found in the postsynaptic cell membrane. The protein localises to the cell projection. Its subcellular location is the dendritic spine membrane. It localises to the cell membrane. The catalysed reaction is Ca(2+)(in) = Ca(2+)(out). The enzyme catalyses Mg(2+)(in) = Mg(2+)(out). It catalyses the reaction Na(+)(in) = Na(+)(out). It carries out the reaction K(+)(in) = K(+)(out). With respect to regulation, channel activity is activated via the interaction with PIRT and phosphatidylinositol 4,5-bisphosphate (PIP2). Both PIRT and PIP2 are required to activate channel activity. The channel is sensitized by ATP binding. Repeated stimulation with capsaicin gives rise to progressively smaller responses, due to desensitization. This desensitization is triggered by the influx of calcium ions and is inhibited by elevated ATP levels. Ca(2+) and CALM displace ATP from its binding site and trigger a conformation change that leads to a closed, desensitized channel. Intracellular PIP2 inhibits desensitization. The double-knot toxin (DkTx) from the Chinese earth tiger tarantula activates the channel and traps it in an open conformation. The Scolopendra mutilans RhTx toxin potentiates the heat activation pathway mediated by this channel by binding to the charge-rich outer pore region (in an activated state). Non-selective calcium permeant cation channel involved in detection of noxious chemical and thermal stimuli. Seems to mediate proton influx and may be involved in intracellular acidosis in nociceptive neurons. Involved in mediation of inflammatory pain and hyperalgesia. Sensitized by a phosphatidylinositol second messenger system activated by receptor tyrosine kinases, which involves PKC isozymes and PCL. Activated by vanilloids, like capsaicin, and temperatures higher than 42 degrees Celsius. Upon activation, exhibits a time- and Ca(2+)-dependent outward rectification, followed by a long-lasting refractory state. Mild extracellular acidic pH (6.5) potentiates channel activation by noxious heat and vanilloids, whereas acidic conditions (pH &lt;6) directly activate the channel. Can be activated by endogenous compounds, including 12-hydroperoxytetraenoic acid and bradykinin. Acts as ionotropic endocannabinoid receptor with central neuromodulatory effects. Triggers a form of long-term depression (TRPV1-LTD) mediated by the endocannabinoid anandamine in the hippocampus and nucleus accumbens by affecting AMPA receptors endocytosis. The polypeptide is Transient receptor potential cation channel subfamily V member 1 (TRPV1) (Canis lupus familiaris (Dog)).